The sequence spans 200 residues: Large ribosomal subunit protein uL4 (200 aa).

The interval 42 to 65 (TRAQKTRSEVSGGGAKPWRQKGTG) is disordered.

Belongs to the universal ribosomal protein uL4 family. As to quaternary structure, part of the 50S ribosomal subunit.

One of the primary rRNA binding proteins, this protein initially binds near the 5'-end of the 23S rRNA. It is important during the early stages of 50S assembly. It makes multiple contacts with different domains of the 23S rRNA in the assembled 50S subunit and ribosome. Functionally, forms part of the polypeptide exit tunnel. This Vibrio cholerae serotype O1 (strain ATCC 39541 / Classical Ogawa 395 / O395) protein is Large ribosomal subunit protein uL4.